Reading from the N-terminus, the 378-residue chain is MQTPKLIRPTLLSMAIVSSMAWATGASAALVPPKGYDAPIEKMKTGDHNFTCEAIPKPYTDKLVFRSKYEGSDKARATLNAVSEEAFRDATKDITTLERGVSKVVMQYMRDGRPEQLDCALNMMTTWAKADALESREFNHTGKSMRKWALGSMSSAYLRLKFSDSHPLANRQQDAQIIEAWFSKLADQVVSDWSNLPLEKINNHSYWAAWSVMSTAVVTNRKDLFDWAVKEFKVAANQVDKDGYLPNEMKRRQRALSYHNYALPPLAMIASFAQANGVDLRPENNGALKRLGDRVLAGVKDPASFAEHNGEKQDMTDLKKDPKFAWLEPYCSLYTCSPDVLEDKHEKQPFKTFRLGGDLTKVYDPTHEKGDKGDNDGS.

Positions 1-28 (MQTPKLIRPTLLSMAIVSSMAWATGASA) are cleaved as a signal peptide. Substrate-binding positions include 67 to 68 (SK), 140 to 141 (HT), and Tyr258.

Belongs to the polysaccharide lyase 5 family.

It is found in the periplasm. The enzyme catalyses Eliminative cleavage of alginate to give oligosaccharides with 4-deoxy-alpha-L-erythro-hex-4-enuronosyl groups at their non-reducing ends and beta-D-mannuronate at their reducing end.. Functionally, catalyzes the depolymerization of alginate by cleaving the beta-1,4 glycosidic bond between two adjacent sugar residues via a beta-elimination mechanism. May serve to degrade mislocalized alginate that is trapped in the periplasmic space. In Pseudomonas syringae pv. tomato (strain ATCC BAA-871 / DC3000), this protein is Alginate lyase.